Here is a 225-residue protein sequence, read N- to C-terminus: Ribonuclease 3 (225 aa).

One can recognise an RNase III domain in the interval 7–129 (IPRLCRTLGY…IIGAIYLDSD (123 aa)). Residue Glu42 participates in Mg(2+) binding. Asp46 is an active-site residue. Mg(2+) contacts are provided by Asp115 and Glu118. Residue Glu118 is part of the active site. Residues 155-225 (DPKTLLQEHL…AAQVLELIKK (71 aa)) enclose the DRBM domain.

It belongs to the ribonuclease III family. As to quaternary structure, homodimer. Mg(2+) serves as cofactor.

Its subcellular location is the cytoplasm. The catalysed reaction is Endonucleolytic cleavage to 5'-phosphomonoester.. Digests double-stranded RNA. Involved in the processing of primary rRNA transcript to yield the immediate precursors to the large and small rRNAs (23S and 16S). Processes some mRNAs, and tRNAs when they are encoded in the rRNA operon. Processes pre-crRNA and tracrRNA of type II CRISPR loci if present in the organism. This Shewanella piezotolerans (strain WP3 / JCM 13877) protein is Ribonuclease 3.